Consider the following 191-residue polypeptide: Calcium-activated potassium channel subunit beta-1 (191 aa).

The Cytoplasmic segment spans residues 1–18; sequence MGKKLVMAQKRGETRALC. The helical transmembrane segment at 19–39 threads the bilayer; sequence LGVAMVVCAAITYYVLGTTVL. The Extracellular portion of the chain corresponds to 40–155; sequence PLYQKSVWTQ…VVYQRLYGPQ (116 aa). N-linked (GlcNAc...) asparagine glycans are attached at residues Asn-80 and Asn-142. Residues 156–176 traverse the membrane as a helical segment; sequence VLLFSFFWPTFLLTGGLLLIA. Over 177–191 the chain is Cytoplasmic; the sequence is MVKLNRSLSILAAQK.

The protein belongs to the KCNMB (TC 8.A.14.1) family. KCNMB1 subfamily. Interacts with KCNMA1 tetramer. There are probably 4 molecules of KCMNB1 per KCNMA1 tetramer. In terms of processing, N-glycosylated. In terms of tissue distribution, expressed in many tissues containing smooth muscles. In brain and heart, it is not expressed except in the vasculature, such as cerebral arteries, aorta and corona arteries.

The protein resides in the membrane. Functionally, regulatory subunit of the calcium activated potassium KCNMA1 (maxiK) channel. Modulates the calcium sensitivity and gating kinetics of KCNMA1, thereby contributing to KCNMA1 channel diversity. Increases the apparent Ca(2+)/voltage sensitivity of the KCNMA1 channel. It also modifies KCNMA1 channel kinetics and alters its pharmacological properties. It slows down the activation and the deactivation kinetics of the channel. Acts as a negative regulator of smooth muscle contraction by enhancing the calcium sensitivity to KCNMA1. Its presence is also a requirement for internal binding of the KCNMA1 channel opener dehydrosoyasaponin I (DHS-1) triterpene glycoside and for external binding of the agonist hormone 17-beta-estradiol (E2). Increases the binding activity of charybdotoxin (CTX) toxin to KCNMA1 peptide blocker by increasing the CTX association rate and decreasing the dissociation rate. This Mus musculus (Mouse) protein is Calcium-activated potassium channel subunit beta-1 (Kcnmb1).